A 200-amino-acid polypeptide reads, in one-letter code: Recombination protein RecR (200 aa).

The segment at 57–72 (CRQCRTLTEQELCPQC) adopts a C4-type zinc-finger fold. Positions 80–175 (TQLCVVEGPT…AATRIAHGVP (96 aa)) constitute a Toprim domain.

It belongs to the RecR family.

In terms of biological role, may play a role in DNA repair. It seems to be involved in an RecBC-independent recombinational process of DNA repair. It may act with RecF and RecO. This Pseudomonas putida (strain GB-1) protein is Recombination protein RecR.